The primary structure comprises 324 residues: tRNA U34 carboxymethyltransferase (324 aa).

Residues Lys92, Trp106, Lys111, Gly131, 153–155, Met197, Tyr201, and Arg316 each bind carboxy-S-adenosyl-L-methionine; that span reads DPS.

This sequence belongs to the class I-like SAM-binding methyltransferase superfamily. CmoB family. In terms of assembly, homotetramer.

The enzyme catalyses carboxy-S-adenosyl-L-methionine + 5-hydroxyuridine(34) in tRNA = 5-carboxymethoxyuridine(34) in tRNA + S-adenosyl-L-homocysteine + H(+). In terms of biological role, catalyzes carboxymethyl transfer from carboxy-S-adenosyl-L-methionine (Cx-SAM) to 5-hydroxyuridine (ho5U) to form 5-carboxymethoxyuridine (cmo5U) at position 34 in tRNAs. The chain is tRNA U34 carboxymethyltransferase from Hahella chejuensis (strain KCTC 2396).